A 204-amino-acid polypeptide reads, in one-letter code: Glycerol-3-phosphate acyltransferase (204 aa).

The next 5 helical transmembrane spans lie at 6–26 (YIII…YIVA), 80–100 (LVGI…VAGH), 122–142 (LAVN…VVAI), 144–164 (KYVS…MIMV), and 168–188 (AGLI…RANI).

Belongs to the PlsY family. In terms of assembly, probably interacts with PlsX.

The protein localises to the cell membrane. It carries out the reaction an acyl phosphate + sn-glycerol 3-phosphate = a 1-acyl-sn-glycero-3-phosphate + phosphate. It functions in the pathway lipid metabolism; phospholipid metabolism. Functionally, catalyzes the transfer of an acyl group from acyl-phosphate (acyl-PO(4)) to glycerol-3-phosphate (G3P) to form lysophosphatidic acid (LPA). This enzyme utilizes acyl-phosphate as fatty acyl donor, but not acyl-CoA or acyl-ACP. The polypeptide is Glycerol-3-phosphate acyltransferase (Clostridioides difficile (strain 630) (Peptoclostridium difficile)).